A 313-amino-acid chain; its full sequence is 4-diphosphocytidyl-2-C-methyl-D-erythritol kinase (313 aa).

Residue Lys-29 is part of the active site. ATP is bound at residue 113 to 123 (PMGGGVGGGSS). Asp-155 is an active-site residue.

This sequence belongs to the GHMP kinase family. IspE subfamily.

The catalysed reaction is 4-CDP-2-C-methyl-D-erythritol + ATP = 4-CDP-2-C-methyl-D-erythritol 2-phosphate + ADP + H(+). The protein operates within isoprenoid biosynthesis; isopentenyl diphosphate biosynthesis via DXP pathway; isopentenyl diphosphate from 1-deoxy-D-xylulose 5-phosphate: step 3/6. In terms of biological role, catalyzes the phosphorylation of the position 2 hydroxy group of 4-diphosphocytidyl-2C-methyl-D-erythritol. This is 4-diphosphocytidyl-2-C-methyl-D-erythritol kinase from Haemophilus influenzae (strain ATCC 51907 / DSM 11121 / KW20 / Rd).